The sequence spans 354 residues: Uroporphyrinogen decarboxylase (354 aa).

Residues 25–29 (RQAGR), Asp-75, Tyr-152, Thr-207, and His-330 each bind substrate.

This sequence belongs to the uroporphyrinogen decarboxylase family. In terms of assembly, homodimer.

Its subcellular location is the cytoplasm. The enzyme catalyses uroporphyrinogen III + 4 H(+) = coproporphyrinogen III + 4 CO2. Its pathway is porphyrin-containing compound metabolism; protoporphyrin-IX biosynthesis; coproporphyrinogen-III from 5-aminolevulinate: step 4/4. Functionally, catalyzes the decarboxylation of four acetate groups of uroporphyrinogen-III to yield coproporphyrinogen-III. This is Uroporphyrinogen decarboxylase from Xanthomonas euvesicatoria pv. vesicatoria (strain 85-10) (Xanthomonas campestris pv. vesicatoria).